A 259-amino-acid polypeptide reads, in one-letter code: Thiazole synthase (259 aa).

K100 acts as the Schiff-base intermediate with DXP in catalysis. 1-deoxy-D-xylulose 5-phosphate is bound by residues G161, 187-188 (AG), and 209-210 (NT).

This sequence belongs to the ThiG family. Homotetramer. Forms heterodimers with either ThiH or ThiS.

It localises to the cytoplasm. The enzyme catalyses [ThiS sulfur-carrier protein]-C-terminal-Gly-aminoethanethioate + 2-iminoacetate + 1-deoxy-D-xylulose 5-phosphate = [ThiS sulfur-carrier protein]-C-terminal Gly-Gly + 2-[(2R,5Z)-2-carboxy-4-methylthiazol-5(2H)-ylidene]ethyl phosphate + 2 H2O + H(+). It participates in cofactor biosynthesis; thiamine diphosphate biosynthesis. In terms of biological role, catalyzes the rearrangement of 1-deoxy-D-xylulose 5-phosphate (DXP) to produce the thiazole phosphate moiety of thiamine. Sulfur is provided by the thiocarboxylate moiety of the carrier protein ThiS. In vitro, sulfur can be provided by H(2)S. This chain is Thiazole synthase, found in Halalkalibacterium halodurans (strain ATCC BAA-125 / DSM 18197 / FERM 7344 / JCM 9153 / C-125) (Bacillus halodurans).